The chain runs to 623 residues: Immunity-related GTPase family Q protein (623 aa).

Cys-152 and Cys-158 are oxidised to a cystine. A coiled-coil region spans residues Ser-155 to Pro-180. Residues Phe-186–Leu-189 carry the LIR 1 motif. Thr-203 bears the Phosphothreonine mark. Positions Ala-223–Ala-449 constitute an IRG-type G domain. The interval Glu-334–Gly-393 is disordered. Over residues Gly-342–Ser-353 the composition is skewed to basic and acidic residues. Residues Trp-421 to Leu-424 carry the LIR 2 motif.

Belongs to the TRAFAC class dynamin-like GTPase superfamily. IRG family. In terms of assembly, interacts (via LIR motif 1) with GABARAPL2. Interacts (via LIR motif 2) with MAP1LC3B/LC3B.

It is found in the lysosome. The protein localises to the cytoplasmic vesicle. Its subcellular location is the autophagosome. Functionally, autophagy receptor that specifically promotes clearance of misfolded MHC class I molecules by targeting them to the lysosome for degradation. Acts as a molecular adapter that specifically recognizes and binds (1) misfolded MHC class I molecules following their ubiquitination, as well as (2) autophagy-related proteins, promoting the recruitment of misfolded MHC class I molecules to autophagy machinery for degradation. Degradation of misfolded MHC class I molecules is essential to prevent accumulation of defective MHC class I complexes at the surface of CD8(+) T-cells and prevent a stronger T-cell-mediated response. In contrast to other members of the family, does not show GTPase activity. This is Immunity-related GTPase family Q protein from Homo sapiens (Human).